Here is a 249-residue protein sequence, read N- to C-terminus: MAQAVEEWYRQMPIITRSYLTAAVVTTVGCTLEIISPYHLYLNPKLVVQHYEIWRLVTNFLYFRKMDLDFLFHMFFLARYCKLLEENSFRGRTADFFYMLLFGATVLTSIVLIGGMIPYISETFARILFLSNSLTFMMVYVWSKHNPFIHMSFLGLFTFTAAYLPWVLLGFSILVGSSTWVDLLGMIAGHVYYFLEDVYPRMTGRRPLKTPSFIKALFADDNVVVAQPPNAGIGAGARFGAMGLDPQAQ.

Residues 1-21 (MAQAVEEWYRQMPIITRSYLT) lie on the Cytoplasmic side of the membrane. The helical transmembrane segment at 22 to 42 (AAVVTTVGCTLEIISPYHLYL) threads the bilayer. Over 43–96 (NPKLVVQHYEIWRLVTNFLYFRKMDLDFLFHMFFLARYCKLLEENSFRGRTADF) the chain is Lumenal. Residues 97 to 117 (FYMLLFGATVLTSIVLIGGMI) traverse the membrane as a helical segment. Over 118–122 (PYISE) the chain is Cytoplasmic. Residues 123–143 (TFARILFLSNSLTFMMVYVWS) traverse the membrane as a helical segment. The Lumenal segment spans residues 144–152 (KHNPFIHMS). A helical membrane pass occupies residues 153-173 (FLGLFTFTAAYLPWVLLGFSI). The Cytoplasmic segment spans residues 174–249 (LVGSSTWVDL…GAMGLDPQAQ (76 aa)).

Belongs to the derlin family. As to expression, expressed in roots, stalks, leaves, embryo and endosperm.

The protein localises to the endoplasmic reticulum membrane. In terms of biological role, may be involved in the degradation process of specific misfolded endoplasmic reticulum (ER) luminal proteins. The sequence is that of Derlin-2.1 (DER2.1) from Zea mays (Maize).